The primary structure comprises 278 residues: Probable 3-hydroxybutyryl-CoA dehydrogenase (278 aa).

Belongs to the 3-hydroxyacyl-CoA dehydrogenase family.

The catalysed reaction is (3S)-3-hydroxybutanoyl-CoA + NADP(+) = acetoacetyl-CoA + NADPH + H(+). It participates in lipid metabolism; butanoate metabolism. The chain is Probable 3-hydroxybutyryl-CoA dehydrogenase (hbd) from Deinococcus radiodurans (strain ATCC 13939 / DSM 20539 / JCM 16871 / CCUG 27074 / LMG 4051 / NBRC 15346 / NCIMB 9279 / VKM B-1422 / R1).